The sequence spans 216 residues: Probable succinyl-CoA:3-ketoacid coenzyme A transferase subunit B (216 aa).

Glu47 is an active-site residue.

This sequence belongs to the 3-oxoacid CoA-transferase subunit B family. In terms of assembly, heterodimer of a subunit A and a subunit B.

The catalysed reaction is a 3-oxo acid + succinyl-CoA = a 3-oxoacyl-CoA + succinate. This chain is Probable succinyl-CoA:3-ketoacid coenzyme A transferase subunit B (scoB), found in Bacillus subtilis (strain 168).